Reading from the N-terminus, the 144-residue chain is Histone H2B.2, sperm (144 aa).

The interval 1–51 (MPRSPSKTSPRKGSPRRGSPSRKASPKRGGKGAKRAGKGGRRRNVVRRRRR) is disordered. 5 consecutive short sequence motifs (SPKK motif) follow at residues 4–7 (SPSK), 9–12 (SPRK), 14–17 (SPRR), 19–22 (SPSR), and 25–28 (SPKR). A phosphoserine mark is found at Ser14, Ser19, and Ser25. Residues 24–51 (ASPKRGGKGAKRAGKGGRRRNVVRRRRR) are compositionally biased toward basic residues. A glycan (O-linked (GlcNAc) serine) is linked at Ser131. Residue Lys139 forms a Glycyl lysine isopeptide (Lys-Gly) (interchain with G-Cter in ubiquitin) linkage.

Belongs to the histone H2B family. As to quaternary structure, the nucleosome is a histone octamer containing two molecules each of H2A, H2B, H3 and H4 assembled in one H3-H4 heterotetramer and two H2A-H2B heterodimers. The octamer wraps approximately 147 bp of DNA. In terms of processing, monoubiquitination of Lys-139 gives a specific tag for epigenetic transcriptional activation and is also prerequisite for histone H3 'Lys-4' and 'Lys-79' methylation. Phosphorylated on SPKK motifs 3, 4 and 5; which may regulate DNA binding. Dephosphorylated during maturation of spermatids to mature sperm and rephosphorylated at fertilization. Post-translationally, glcNAcylation at Ser-131 promotes monoubiquitination of Lys-139. It fluctuates in response to extracellular glucose, and associates with transcribed genes.

Its subcellular location is the nucleus. The protein resides in the chromosome. In terms of biological role, core component of nucleosome. Nucleosomes wrap and compact DNA into chromatin, limiting DNA accessibility to the cellular machineries which require DNA as a template. Histones thereby play a central role in transcription regulation, DNA repair, DNA replication and chromosomal stability. DNA accessibility is regulated via a complex set of post-translational modifications of histones, also called histone code, and nucleosome remodeling. This chain is Histone H2B.2, sperm, found in Strongylocentrotus purpuratus (Purple sea urchin).